Here is a 117-residue protein sequence, read N- to C-terminus: DNA-directed RNA polymerase subunit omega (117 aa).

This sequence belongs to the RNA polymerase subunit omega family. In terms of assembly, the RNAP catalytic core consists of 2 alpha, 1 beta, 1 beta' and 1 omega subunit. When a sigma factor is associated with the core the holoenzyme is formed, which can initiate transcription.

It carries out the reaction RNA(n) + a ribonucleoside 5'-triphosphate = RNA(n+1) + diphosphate. Promotes RNA polymerase assembly. Latches the N- and C-terminal regions of the beta' subunit thereby facilitating its interaction with the beta and alpha subunits. This is DNA-directed RNA polymerase subunit omega from Ruegeria pomeroyi (strain ATCC 700808 / DSM 15171 / DSS-3) (Silicibacter pomeroyi).